The primary structure comprises 1388 residues: DNA-directed RNA polymerase subunit beta (1388 aa).

Belongs to the RNA polymerase beta chain family. The RNAP catalytic core consists of 2 alpha, 1 beta, 1 beta' and 1 omega subunit. When a sigma factor is associated with the core the holoenzyme is formed, which can initiate transcription.

The enzyme catalyses RNA(n) + a ribonucleoside 5'-triphosphate = RNA(n+1) + diphosphate. Functionally, DNA-dependent RNA polymerase catalyzes the transcription of DNA into RNA using the four ribonucleoside triphosphates as substrates. This chain is DNA-directed RNA polymerase subunit beta, found in Xylella fastidiosa (strain Temecula1 / ATCC 700964).